Here is an 86-residue protein sequence, read N- to C-terminus: Immunity protein CdiI-1 (86 aa).

As to quaternary structure, interacts with the C-terminal fragment (CT) of cognate toxin protein CdiA-EC869.

Its function is as follows. Immunity protein component of a toxin-immunity protein module, which functions as a cellular contact-dependent growth inhibition (CDI) system. CDI modules allow bacteria to communicate with and inhibit the growth of closely related neighboring bacteria in a contact-dependent fashion. Neutralizes the toxic activity of cognate toxin CdiA-EC869 (the C-terminal 289 residue CT fragment). Does not inhibit toxic activity of CdiA from other toxin-immunity modules or strains of E.coli. The chain is Immunity protein CdiI-1 from Escherichia coli O157:H7 (strain EC869).